A 92-amino-acid polypeptide reads, in one-letter code: FMRFamide-like neuropeptides 5 (92 aa).

Positions 1-41 (MSSRSTTIAFLFIATLLVFQCVSAQSSAEDADYLEKYQRIA) are excised as a propeptide. F51 and F61 each carry phenylalanine amide. The propeptide occupies 64–82 (SRNTWEDGYASPSVNELYV). F91 bears the Phenylalanine amide mark.

It belongs to the FARP (FMRFamide related peptide) family. Each flp gene is expressed in a distinct set of neurons. Flp-5 is expressed in the ASE sensory neurons, the 14 and M4 cholinergic pharyngeal motoneurons, and the PVT and RMG neurons. It is weakly expressed in the PB and 12 neurons. Also expressed in pharyngeal muscle.

The protein localises to the secreted. Functionally, FMRFamides and FMRFamide-like peptides are neuropeptides. GAKFIRF-amide has an excitatory effect on dissected pharyngeal myogenic muscle system. The protein is FMRFamide-like neuropeptides 5 of Caenorhabditis elegans.